The chain runs to 206 residues: Outer-membrane lipoprotein LolB (206 aa).

Positions 1 to 18 are cleaved as a signal peptide; that stretch reads MSLLKNLLAPCLALLLAG. The N-palmitoyl cysteine moiety is linked to residue cysteine 19. Cysteine 19 is lipidated: S-diacylglycerol cysteine.

This sequence belongs to the LolB family. In terms of assembly, monomer.

The protein resides in the cell outer membrane. In terms of biological role, plays a critical role in the incorporation of lipoproteins in the outer membrane after they are released by the LolA protein. This Stutzerimonas stutzeri (strain A1501) (Pseudomonas stutzeri) protein is Outer-membrane lipoprotein LolB.